We begin with the raw amino-acid sequence, 306 residues long: MAKHVAVLMGGWSPEREVSLRSGAGCAKALEEVGYRVTRVDVDRDVAEVLARLKPDVALNLLHGCPGEDGTIQGILEILRIPYSHSGVLASALAMDKARAKVVMAAAGIPVPGGHLVTRAEAAKGHVLPPPYVLKPNTGGSSVGVFIVKEDQPHPPQELFRADWTFGESLMAEPFIKGLELTCGVMGDRALDVIEVEAVHGFYDYESKYAAGGSRHILPARVLPQIYQQVRMLALEAHRALGCRGISRADFRYDDTLPDGKGLVCLEVNTQPGMTETSLVPDMAAHAGISFGELVTWMVEDATLDR.

One can recognise an ATP-grasp domain in the interval 101-300 (KVVMAAAGIP…FGELVTWMVE (200 aa)). 128 to 182 (LPPPYVLKPNTGGSSVGVFIVKEDQPHPPQELFRADWTFGESLMAEPFIKGLELT) lines the ATP pocket. Positions 250, 267, and 269 each coordinate Mg(2+).

The protein belongs to the D-alanine--D-alanine ligase family. The cofactor is Mg(2+). Mn(2+) is required as a cofactor.

The protein localises to the cytoplasm. The enzyme catalyses 2 D-alanine + ATP = D-alanyl-D-alanine + ADP + phosphate + H(+). It functions in the pathway cell wall biogenesis; peptidoglycan biosynthesis. Functionally, cell wall formation. This Azorhizobium caulinodans (strain ATCC 43989 / DSM 5975 / JCM 20966 / LMG 6465 / NBRC 14845 / NCIMB 13405 / ORS 571) protein is D-alanine--D-alanine ligase.